A 310-amino-acid polypeptide reads, in one-letter code: tRNA-cytidine(32) 2-sulfurtransferase (310 aa).

A PP-loop motif motif is present at residues 44 to 49; sequence SGGKDS. Residues Cys-119, Cys-122, and Cys-210 each contribute to the [4Fe-4S] cluster site.

The protein belongs to the TtcA family. In terms of assembly, homodimer. Mg(2+) serves as cofactor. [4Fe-4S] cluster is required as a cofactor.

It localises to the cytoplasm. The enzyme catalyses cytidine(32) in tRNA + S-sulfanyl-L-cysteinyl-[cysteine desulfurase] + AH2 + ATP = 2-thiocytidine(32) in tRNA + L-cysteinyl-[cysteine desulfurase] + A + AMP + diphosphate + H(+). It functions in the pathway tRNA modification. Catalyzes the ATP-dependent 2-thiolation of cytidine in position 32 of tRNA, to form 2-thiocytidine (s(2)C32). The sulfur atoms are provided by the cysteine/cysteine desulfurase (IscS) system. In Saccharophagus degradans (strain 2-40 / ATCC 43961 / DSM 17024), this protein is tRNA-cytidine(32) 2-sulfurtransferase.